The primary structure comprises 138 residues: Basic phospholipase A2 homolog ammodytin L (138 aa).

A signal peptide spans 1 to 16; that stretch reads MRILWIVAVCLIGVEG. 7 cysteine pairs are disulfide-bonded: Cys42–Cys131, Cys44–Cys60, Cys59–Cys111, Cys65–Cys138, Cys66–Cys104, Cys73–Cys97, and Cys91–Cys102. Positions 121–133 are important for membrane-damaging activities in eukaryotes and bacteria; heparin-binding; that stretch reads KKYKVYLRFKCKG.

The protein belongs to the phospholipase A2 family. Group II subfamily. S49 sub-subfamily. Expressed by the venom gland.

It is found in the secreted. Snake venom phospholipase A2 homolog that lacks enzymatic activity. Is very active in inducing myonecrosis in vivo and shows a potent calcium-independent membrane-damaging activity in vitro, most probably by binding and incorporating in the membrane. Also acts as a presynaptic neurotoxin. A model of myotoxic mechanism has been proposed: an apo Lys49-PLA2 is activated by the entrance of a hydrophobic molecule (e.g. fatty acid) at the hydrophobic channel of the protein leading to a reorientation of a monomer. This reorientation causes a transition between 'inactive' to 'active' states, causing alignment of C-terminal and membrane-docking sites (MDoS) side-by-side and putting the membrane-disruption sites (MDiS) in the same plane, exposed to solvent and in a symmetric position for both monomers. The MDoS region stabilizes the toxin on membrane by the interaction of charged residues with phospholipid head groups. Subsequently, the MDiS region destabilizes the membrane with penetration of hydrophobic residues. This insertion causes a disorganization of the membrane, allowing an uncontrolled influx of ions (i.e. calcium and sodium), and eventually triggering irreversible intracellular alterations and cell death. The protein is Basic phospholipase A2 homolog ammodytin L of Vipera ammodytes ammodytes (Western sand viper).